The sequence spans 435 residues: Nuclear hormone receptor family member nhr-28 (435 aa).

The nuclear receptor DNA-binding region spans 5–80; that stretch reads KKPCSVCGEA…VGMRKSAVQR (76 aa). 2 NR C4-type zinc fingers span residues 8 to 28 and 44 to 63; these read CSVC…CRAC and CRAM…CRAC. Positions 84 to 106 are disordered; it reads LFGRQDSSDGSNPRVSPSTSWPM. Positions 91-104 are enriched in polar residues; the sequence is SDGSNPRVSPSTSW. Residues 113–374 form the NR LBD domain; sequence IEEPGMATLN…ETFYELVSGR (262 aa).

Belongs to the nuclear hormone receptor family.

It localises to the nucleus. In terms of biological role, orphan nuclear receptor. This chain is Nuclear hormone receptor family member nhr-28, found in Caenorhabditis briggsae.